The primary structure comprises 362 residues: Phosphoserine aminotransferase (362 aa).

Arg-42 contributes to the L-glutamate binding site. Residues 76-77, Trp-102, Thr-153, Asp-174, and Gln-197 contribute to the pyridoxal 5'-phosphate site; that span reads AR. At Lys-198 the chain carries N6-(pyridoxal phosphate)lysine. A pyridoxal 5'-phosphate-binding site is contributed by 239–240; sequence NT.

It belongs to the class-V pyridoxal-phosphate-dependent aminotransferase family. SerC subfamily. As to quaternary structure, homodimer. The cofactor is pyridoxal 5'-phosphate.

Its subcellular location is the cytoplasm. The enzyme catalyses O-phospho-L-serine + 2-oxoglutarate = 3-phosphooxypyruvate + L-glutamate. It carries out the reaction 4-(phosphooxy)-L-threonine + 2-oxoglutarate = (R)-3-hydroxy-2-oxo-4-phosphooxybutanoate + L-glutamate. The protein operates within amino-acid biosynthesis; L-serine biosynthesis; L-serine from 3-phospho-D-glycerate: step 2/3. It functions in the pathway cofactor biosynthesis; pyridoxine 5'-phosphate biosynthesis; pyridoxine 5'-phosphate from D-erythrose 4-phosphate: step 3/5. In terms of biological role, catalyzes the reversible conversion of 3-phosphohydroxypyruvate to phosphoserine and of 3-hydroxy-2-oxo-4-phosphonooxybutanoate to phosphohydroxythreonine. The protein is Phosphoserine aminotransferase of Proteus mirabilis (strain HI4320).